We begin with the raw amino-acid sequence, 269 residues long: Probable ribosomal RNA small subunit methyltransferase A (269 aa).

His-23, Leu-25, Gly-50, Glu-71, Asp-95, and Asn-110 together coordinate S-adenosyl-L-methionine.

It belongs to the class I-like SAM-binding methyltransferase superfamily. rRNA adenine N(6)-methyltransferase family. RsmA subfamily.

Its subcellular location is the cytoplasm. In terms of biological role, specifically dimethylates two adjacent adenosines in the loop of a conserved hairpin near the 3'-end of 16S rRNA in the 30S particle. May play a critical role in biogenesis of 30S subunits. The sequence is that of Probable ribosomal RNA small subunit methyltransferase A from Pyrococcus abyssi (strain GE5 / Orsay).